The sequence spans 118 residues: uncharacterized protein (118 aa).

The N-terminal stretch at 1–18 (MSKLIFLFVVATLATIKA) is a signal peptide. Asparagine 24 is a glycosylation site (N-linked (GlcNAc...) asparagine; by host).

This is an uncharacterized protein from Magallana gigas (Pacific oyster).